The sequence spans 438 residues: GTPase Der (438 aa).

EngA-type G domains are found at residues 4 to 168 and 177 to 352; these read PIVA…PKGY and IRIA…TNYS. Residues 10 to 17, 57 to 61, 120 to 123, 183 to 190, 230 to 234, and 295 to 298 each bind GTP; these read GRPNVGKS, DTGGI, NKID, GKPNVGKS, DTAGL, and NKWD. The KH-like domain maps to 353–437; it reads KRISTGVLND…GIKMEFRERK (85 aa).

Belongs to the TRAFAC class TrmE-Era-EngA-EngB-Septin-like GTPase superfamily. EngA (Der) GTPase family. As to quaternary structure, associates with the 50S ribosomal subunit.

In terms of biological role, GTPase that plays an essential role in the late steps of ribosome biogenesis. This is GTPase Der from Clostridium tetani (strain Massachusetts / E88).